A 630-amino-acid polypeptide reads, in one-letter code: Forkhead box protein O (630 aa).

Residues 1–45 (MDGFVQEWSNLPRSDNGLHMDQLVGELPTDGGFEPQTRARSNTWP) are disordered. Thr-43 is modified (phosphothreonine; by PKB/AKT1). Residues 92–198 (WGNLSYADLI…ETSRYEKRRG (107 aa)) constitute a DNA-binding region (fork-head). Position 187 is a phosphoserine; by PKB/AKT1 (Ser-187). Positions 214–260 (GLNDATPSPSSSVSEGLDHFPESPLHSGGFQLSPDFRQRASSNASSC) are disordered. Positions 218-227 (ATPSPSSSVS) are enriched in polar residues. Ser-255 is subject to Phosphoserine; by PKB/AKT1. Residues Ser-258, Ser-259, and Ser-264 each carry the phosphoserine modification. Disordered regions lie at residues 318 to 379 (SAAS…QQQQ) and 403 to 432 (TRDGLSPNSVTTTMSPAYPNSEPSSDSLNT). Composition is skewed to low complexity over residues 332–350 (QQQQQQQQQQAQQQSQLPQ) and 367–379 (QPQAQQQQQQQQQ). Polar residues-rich tracts occupy residues 408–417 (SPNSVTTTMS) and 423–432 (SEPSSDSLNT).

Interacts with melt.

The protein localises to the cytoplasm. Its subcellular location is the nucleus. Transcription factor involved in the regulation of the insulin signaling pathway. Consistently activates both the downstream target Thor\d4EBP and the feedback control target InR. Involved in negative regulation of the cell cycle, modulating cell growth and proliferation. In response to cellular stresses, such as nutrient deprivation or increased levels of reactive oxygen species, foxo is activated and inhibits growth through the action of target genes such as Thor. Foxo activated in the adult fat body can regulate lifespan in adults; an insulin peptide itself may function as one secondary messenger of insulin-regulated aging. Also regulates Lip4, homolog of human acid lipases, thereby acting as a key modulator of lipid metabolism by insulin signaling and integrates insulin responses to glucose and lipid homeostasis. The protein is Forkhead box protein O of Drosophila grimshawi (Hawaiian fruit fly).